A 215-amino-acid chain; its full sequence is CUE domain-containing protein 4, mitochondrial (215 aa).

Residues 1-29 (MQPEQLAGCAVVLTVTVLTLRWMFRVDKG) constitute a mitochondrion transit peptide. Positions 48-90 (VNSEHVHLVKTVFPHLESSAIAYDLQKTKNVDATIENALRGQP) constitute a CUE domain. The segment at 109-191 (GAGASSHSEE…KEREELFRKR (83 aa)) is disordered. Composition is skewed to low complexity over residues 122-140 (SHEVTSNVSSGSSASSLAS) and 153-165 (SSRISSSDNSSSS). A compositionally biased stretch (basic and acidic residues) spans 180–191 (SKKEREELFRKR).

It is found in the mitochondrion. This Schizosaccharomyces pombe (strain 972 / ATCC 24843) (Fission yeast) protein is CUE domain-containing protein 4, mitochondrial.